The primary structure comprises 360 residues: Histidinol-phosphate aminotransferase (360 aa).

Lysine 224 is modified (N6-(pyridoxal phosphate)lysine).

It belongs to the class-II pyridoxal-phosphate-dependent aminotransferase family. Histidinol-phosphate aminotransferase subfamily. It depends on pyridoxal 5'-phosphate as a cofactor.

It carries out the reaction L-histidinol phosphate + 2-oxoglutarate = 3-(imidazol-4-yl)-2-oxopropyl phosphate + L-glutamate. The protein operates within amino-acid biosynthesis; L-histidine biosynthesis; L-histidine from 5-phospho-alpha-D-ribose 1-diphosphate: step 7/9. The polypeptide is Histidinol-phosphate aminotransferase (Methanococcoides burtonii (strain DSM 6242 / NBRC 107633 / OCM 468 / ACE-M)).